A 457-amino-acid polypeptide reads, in one-letter code: ADP-dependent glucose/glucosamine kinase (457 aa).

In terms of domain architecture, ADPK spans T5–H457. D-glucose contacts are provided by residues D37, E91, G115 to Q116, and H179. E269 is a binding site for Mg(2+). N295 serves as a coordination point for ADP. E298 is a binding site for Mg(2+). ADP-binding positions include H345–T346, V432, and G442. D443 contributes to the D-glucose binding site. D443 is a binding site for Mg(2+). The active-site Proton acceptor is D443.

This sequence belongs to the ADP-dependent glucokinase family. Mg(2+) is required as a cofactor.

Its subcellular location is the cytoplasm. The catalysed reaction is D-glucose + ADP = D-glucose 6-phosphate + AMP + H(+). The enzyme catalyses D-glucosamine + ADP = D-glucosamine 6-phosphate + AMP + H(+). It participates in carbohydrate degradation; glycolysis. Inhibited by 8-bromoadenosine phosphate (8-Br-AMP). In terms of biological role, catalyzes the ADP-dependent phosphorylation of D-glucose to D-glucose 6-phosphate and glucosamine to glucosamine 6-phosphate. This Pyrococcus horikoshii (strain ATCC 700860 / DSM 12428 / JCM 9974 / NBRC 100139 / OT-3) protein is ADP-dependent glucose/glucosamine kinase.